The following is a 316-amino-acid chain: ATP synthase gamma chain (316 aa).

The protein belongs to the ATPase gamma chain family. As to quaternary structure, F-type ATPases have 2 components, CF(1) - the catalytic core - and CF(0) - the membrane proton channel. CF(1) has five subunits: alpha(3), beta(3), gamma(1), delta(1), epsilon(1). CF(0) has three main subunits: a, b and c.

The protein localises to the cellular thylakoid membrane. Its function is as follows. Produces ATP from ADP in the presence of a proton gradient across the membrane. The gamma chain is believed to be important in regulating ATPase activity and the flow of protons through the CF(0) complex. In Parasynechococcus marenigrum (strain WH8102), this protein is ATP synthase gamma chain.